A 485-amino-acid polypeptide reads, in one-letter code: Efflux pump bik6 (485 aa).

The next 6 membrane-spanning stretches (helical) occupy residues 42–62 (VYTT…SAIY), 86–106 (LLIF…EVYG), 108–128 (KWPA…TATA), 139–159 (FFAG…IVDI), 172–192 (YGIT…AFIA), and 199–219 (WTEY…ALWL). Asparagine 241 carries an N-linked (GlcNAc...) asparagine glycan. The next 6 membrane-spanning stretches (helical) occupy residues 269–289 (MLLD…YAIL), 306–326 (WGPV…LFAA), 353–373 (LPPM…FGWT), 379–399 (SSPW…TTIF), 417–437 (AIAA…LFVW), and 447–467 (WGST…FLFF).

This sequence belongs to the major facilitator superfamily.

The protein resides in the membrane. Functionally, efflux pump; part of the gene cluster that mediates the biosynthesis of bikaverin, a red pigment also considered as a mycotoxin. This Gibberella fujikuroi (strain CBS 195.34 / IMI 58289 / NRRL A-6831) (Bakanae and foot rot disease fungus) protein is Efflux pump bik6.